Reading from the N-terminus, the 297-residue chain is Cell division protein FtsQ (297 aa).

Residues 1–33 (MRPLSFRRRTAQARPDPAPSRLSYRVQRLLLTP) are Cytoplasmic-facing. A helical transmembrane segment spans residues 34–54 (LFHALIRVGLPAFVLAFGVGW). Residues 55–297 (LLQNQELRDE…IRGLTNDRIE (243 aa)) are Periplasmic-facing. The region spanning 82–150 (FMVNAMSVSG…GILAIEIVER (69 aa)) is the POTRA domain.

Belongs to the FtsQ/DivIB family. FtsQ subfamily.

The protein localises to the cell inner membrane. Its function is as follows. Essential cell division protein. This chain is Cell division protein FtsQ, found in Dinoroseobacter shibae (strain DSM 16493 / NCIMB 14021 / DFL 12).